Reading from the N-terminus, the 309-residue chain is Protein FdhE homolog (309 aa).

It belongs to the FdhE family.

It localises to the cytoplasm. Necessary for formate dehydrogenase activity. The sequence is that of Protein FdhE homolog from Yersinia enterocolitica serotype O:8 / biotype 1B (strain NCTC 13174 / 8081).